The primary structure comprises 297 residues: Transcription factor LRL3 (297 aa).

A disordered region spans residues 59–109 (PDQFHHPQESGGPTMGSQEGLQPQGTVSTTSAPVVRQKPRVRARRGQATDP). Residues 73 to 90 (MGSQEGLQPQGTVSTTSA) are compositionally biased toward polar residues. The basic motif; degenerate stretch occupies residues 105–118 (QATDPHSIAERLRR). A bHLH domain is found at 105 to 154 (QATDPHSIAERLRRERIAERMKSLQELVPNTNKTDKASMLDEIIEYVRFL). Positions 119 to 154 (ERIAERMKSLQELVPNTNKTDKASMLDEIIEYVRFL) are helix-loop-helix motif.

In terms of assembly, homodimer. In terms of tissue distribution, expressed in trichomes of the root maturation zone. Detected constitutively in flowers.

Its subcellular location is the nucleus. In terms of biological role, transcription factor that regulates the development of root hairs. Does not seem to be involved in the regulation of sperm cell development. The polypeptide is Transcription factor LRL3 (Arabidopsis thaliana (Mouse-ear cress)).